The following is a 129-amino-acid chain: Large ribosomal subunit protein bL12 (129 aa).

This sequence belongs to the bacterial ribosomal protein bL12 family. As to quaternary structure, homodimer. Part of the ribosomal stalk of the 50S ribosomal subunit. Forms a multimeric L10(L12)X complex, where L10 forms an elongated spine to which 2 to 4 L12 dimers bind in a sequential fashion. Binds GTP-bound translation factors.

Functionally, forms part of the ribosomal stalk which helps the ribosome interact with GTP-bound translation factors. Is thus essential for accurate translation. The polypeptide is Large ribosomal subunit protein bL12 (Pelotomaculum thermopropionicum (strain DSM 13744 / JCM 10971 / SI)).